We begin with the raw amino-acid sequence, 434 residues long: Adenylosuccinate synthetase (434 aa).

Residues 14–20 (GDEGKGK) and 42–44 (GHE) each bind GTP. The active-site Proton acceptor is the D15. The Mg(2+) site is built by D15 and G42. Residues 15–18 (DEGK), 40–43 (NSGH), T133, R147, N229, T244, and R308 each bind IMP. H43 serves as the catalytic Proton donor. 304-310 (VTTGRVR) is a binding site for substrate. GTP is bound by residues R310, 336 to 338 (KLD), and 422 to 424 (GTG).

The protein belongs to the adenylosuccinate synthetase family. Homodimer. Mg(2+) serves as cofactor.

It is found in the cytoplasm. The catalysed reaction is IMP + L-aspartate + GTP = N(6)-(1,2-dicarboxyethyl)-AMP + GDP + phosphate + 2 H(+). Its pathway is purine metabolism; AMP biosynthesis via de novo pathway; AMP from IMP: step 1/2. Its function is as follows. Plays an important role in the salvage pathway for purine nucleotide biosynthesis. Catalyzes the first committed step in the biosynthesis of AMP from IMP. The sequence is that of Adenylosuccinate synthetase from Theileria parva (East coast fever infection agent).